Here is a 333-residue protein sequence, read N- to C-terminus: MEERMVSAEAQTEEAAVEQGIRPHSFEQYIGQEKVKQNLKVFIEAAKMREEALDHVLLYGPPGLGKTTLSTIIANELGVQMRTTSGPAIERPGDLAAILTALEPGDVLFIDEIHRLNRMVEEVLYPAMEDYCIDIVIGKGPTARSVRLDLPPFTLVGATTRAGMLSSPLRDRFGVMARLEYYNVEELTTIIERTATIFDTELERDASIEIARRSRGTPRIANRLLRRVRDFAQVSGDMRISSSRAIESLERLQVDRLGLDHIDHKLIKGIMTKFNGGPVGLETISATIGEETDTIEEVYEPYLLQIGFLQRTPRGRVVTPLAYEHFNMEVPNK.

The segment at 1–182 (MEERMVSAEA…FGVMARLEYY (182 aa)) is large ATPase domain (RuvB-L). Residues Ile21, Arg22, Gly63, Lys66, Thr67, Thr68, 129-131 (EDY), Arg172, Tyr182, and Arg219 contribute to the ATP site. Position 67 (Thr67) interacts with Mg(2+). Residues 183–253 (NVEELTTIIE…RAIESLERLQ (71 aa)) are small ATPAse domain (RuvB-S). The head domain (RuvB-H) stretch occupies residues 256–333 (RLGLDHIDHK…EHFNMEVPNK (78 aa)). 2 residues coordinate DNA: Arg311 and Arg316.

Belongs to the RuvB family. As to quaternary structure, homohexamer. Forms an RuvA(8)-RuvB(12)-Holliday junction (HJ) complex. HJ DNA is sandwiched between 2 RuvA tetramers; dsDNA enters through RuvA and exits via RuvB. An RuvB hexamer assembles on each DNA strand where it exits the tetramer. Each RuvB hexamer is contacted by two RuvA subunits (via domain III) on 2 adjacent RuvB subunits; this complex drives branch migration. In the full resolvosome a probable DNA-RuvA(4)-RuvB(12)-RuvC(2) complex forms which resolves the HJ.

It localises to the cytoplasm. The enzyme catalyses ATP + H2O = ADP + phosphate + H(+). Its function is as follows. The RuvA-RuvB-RuvC complex processes Holliday junction (HJ) DNA during genetic recombination and DNA repair, while the RuvA-RuvB complex plays an important role in the rescue of blocked DNA replication forks via replication fork reversal (RFR). RuvA specifically binds to HJ cruciform DNA, conferring on it an open structure. The RuvB hexamer acts as an ATP-dependent pump, pulling dsDNA into and through the RuvAB complex. RuvB forms 2 homohexamers on either side of HJ DNA bound by 1 or 2 RuvA tetramers; 4 subunits per hexamer contact DNA at a time. Coordinated motions by a converter formed by DNA-disengaged RuvB subunits stimulates ATP hydrolysis and nucleotide exchange. Immobilization of the converter enables RuvB to convert the ATP-contained energy into a lever motion, pulling 2 nucleotides of DNA out of the RuvA tetramer per ATP hydrolyzed, thus driving DNA branch migration. The RuvB motors rotate together with the DNA substrate, which together with the progressing nucleotide cycle form the mechanistic basis for DNA recombination by continuous HJ branch migration. Branch migration allows RuvC to scan DNA until it finds its consensus sequence, where it cleaves and resolves cruciform DNA. This Halalkalibacterium halodurans (strain ATCC BAA-125 / DSM 18197 / FERM 7344 / JCM 9153 / C-125) (Bacillus halodurans) protein is Holliday junction branch migration complex subunit RuvB.